The primary structure comprises 129 residues: Small ribosomal subunit protein uS9 (129 aa).

The protein belongs to the universal ribosomal protein uS9 family.

In Helicobacter pylori (strain Shi470), this protein is Small ribosomal subunit protein uS9.